The sequence spans 235 residues: Putative 4'-phosphopantetheinyl transferase HI_0152 (235 aa).

Residues Asp112, Glu114, and Glu155 each coordinate Mg(2+).

Belongs to the P-Pant transferase superfamily. Gsp/Sfp/HetI/AcpT family. The cofactor is Mg(2+).

Functionally, may transfer the 4'-phosphopantetheine moiety from coenzyme A (CoA) to a serine residue of a carrier protein domain. This Haemophilus influenzae (strain ATCC 51907 / DSM 11121 / KW20 / Rd) protein is Putative 4'-phosphopantetheinyl transferase HI_0152.